Here is a 567-residue protein sequence, read N- to C-terminus: uncharacterized protein (567 aa).

Topologically, residues 1–31 (MLDTILINVFRRDGDDDDDDGQDPALQELYS) are lumenal. The chain crosses the membrane as a helical span at residues 32 to 52 (SWALFILLVLLIGALLTSYYV). At 53–64 (QSKKIRAIHETV) the chain is on the cytoplasmic side. A helical transmembrane segment spans residues 65 to 85 (ISVFVGMVVGLIIRVSPGLII). Over 86–87 (QN) the chain is Lumenal. A helical membrane pass occupies residues 88–108 (MVSFHSTYFFNVLLPPIILNS). Topologically, residues 109–128 (GYELHQSNFFRNIGTILTFA) are cytoplasmic. The chain crosses the membrane as a helical span at residues 129-149 (FAGTFISAVTLGVLVYIFSFL). Topologically, residues 150–159 (NFENLSMTFV) are lumenal. The chain crosses the membrane as a helical span at residues 160–180 (EALSMGATLSATDPVTVLAIF). Residues 181–188 (NSYKVDQK) lie on the Cytoplasmic side of the membrane. A helical membrane pass occupies residues 189–209 (LYTIIFGESILNDAVAIVMFE). At 210-227 (TLQQFQGKTLHFFTLFSG) the chain is on the lumenal side. A helical transmembrane segment spans residues 228-248 (IGIFIITFFISLLIGVSIGLI). Residues 249–277 (TALLLKYSYLRRYPSIESCIILLMAYTSY) are Cytoplasmic-facing. Residues 278–298 (FFSNGCHMSGVVSLLFCGITL) traverse the membrane as a helical segment. Topologically, residues 299-315 (KHYAFFNMSYKAKLSTK) are lumenal. A helical membrane pass occupies residues 316–338 (YVFRVLAQLSENFIFIYLGMSLF). Residues 339–347 (TQVDLVYKP) are Cytoplasmic-facing. A helical transmembrane segment spans residues 348 to 366 (IFILITTVAVTASRYMNVF). Topologically, residues 367 to 392 (PLSNLLNKFHRQRNGNLIDHIPYSYQ) are lumenal. Residues 393-413 (MMLFWAGLRGAVGVALAAGFE) form a helical membrane-spanning segment. Over 414–424 (GENAQTLRATT) the chain is Cytoplasmic. Residues 425–445 (LVVVVLTLIIFGGTTARMLEI) form a helical membrane-spanning segment. The Lumenal segment spans residues 446-567 (LHIETGVAAD…RDNLKNGTKK (122 aa)). Serine 515 is modified (phosphoserine).

It belongs to the monovalent cation:proton antiporter 1 (CPA1) transporter (TC 2.A.36) family.

Its subcellular location is the golgi apparatus membrane. This is an uncharacterized protein from Schizosaccharomyces pombe (strain 972 / ATCC 24843) (Fission yeast).